Reading from the N-terminus, the 451-residue chain is Adenylosuccinate synthetase isozyme 2 (451 aa).

Residues 34 to 40 (GDEGKGK) and 62 to 64 (GHT) contribute to the GTP site. Asp35 functions as the Proton acceptor in the catalytic mechanism. The Mg(2+) site is built by Asp35 and Gly62. Asp35 is a substrate binding site. IMP is bound by residues 35–38 (DEGK), 60–63 (NAGH), Thr157, Arg171, Asn250, Thr265, and Arg329. His63 functions as the Proton donor in the catalytic mechanism. Position 325 to 331 (325 to 331 (VTTGRKR)) interacts with substrate. GTP contacts are provided by residues Arg331, 357–359 (KLD), and 439–442 (GVGK).

The protein belongs to the adenylosuccinate synthetase family. Homodimer. Mg(2+) serves as cofactor.

It is found in the cytoplasm. The protein resides in the mitochondrion. The catalysed reaction is IMP + L-aspartate + GTP = N(6)-(1,2-dicarboxyethyl)-AMP + GDP + phosphate + 2 H(+). It functions in the pathway purine metabolism; AMP biosynthesis via de novo pathway; AMP from IMP: step 1/2. Inhibited competitively by AMP and IMP and non-competitively by fructose 1,6-bisphosphate. Its function is as follows. Plays an important role in the de novo pathway and in the salvage pathway of purine nucleotide biosynthesis. Catalyzes the first committed step in the biosynthesis of AMP from IMP. The polypeptide is Adenylosuccinate synthetase isozyme 2 (Gallus gallus (Chicken)).